An 808-amino-acid polypeptide reads, in one-letter code: MAPPSVGRKSKNISKGKVDARTLKRKRVEEDLEKLQKSVDELDAKAEIKNFSELPLSGPTSSGLEASHFKTLTDVQSKAVPLALKGKDILGAAKTGSGKTLAFLVPVLENLYRQKWTELDGLGALIISPTRELAIQIFEVLRKIGRYHTFSAGLIIGGRSLQEERERLGRMNILVCTPGRMLQHMDQTAAFDVDNLQMLVLDEADRIMDMGFQTSVDAILEHLPKQRQTMLFSATQTKKVSDLARLSLKEPEYVAVHEAASSATPTTLQQHYCVVPLPEKLNTLFGFIRANLKAKIIVFMSSGKQVRFVYESLRHLQPGIPLLHLHGRQKQTARLDITSKFSSSKNSCIFATDVVARGLDFPAVDWVIQLDCPEDADTYIHRVGRTARYGKVGRAVLFLDPSEEEGMLKRLEHKKVPIQKINIRPNKTQDIKNQLQNMCFQDPELKYLGQKAFVSYAKSVFLQKDKEIFNINDIDLEGYASSIGLPGAPKIKFQKGNDAKNVKNAPRAAIESSDEDSETEKKPKKKDEVRTKYDRMFERRNQDVLSGHYSKMIADDTPMKDVDGTADADEDNDFLSVKRVLPVDNDDTSDDEDDDDDDDDDDDDVAATGPLGKVIEGISKDPIVIDSKRKEKLLKSKKKLLKLKDRGTKLVFDEEGNPHQVYELQDEEDFRAKGTAEEQRAKFLEEEAERVREADLLDKQTAKDKKREKREKRKAREAALDDDDEEALELVDAGDDEDPMALLKSLPLPEDEEDEDSTARPAKRPKKWFEDDSDDERKVAKRKGRVIEAADEPETLEDLEALAAGLLN.

The tract at residues 1–20 (MAPPSVGRKSKNISKGKVDA) is disordered. Positions 49 to 77 (KNFSELPLSGPTSSGLEASHFKTLTDVQS) match the Q motif motif. One can recognise a Helicase ATP-binding domain in the interval 80–254 (VPLALKGKDI…RLSLKEPEYV (175 aa)). Residue 93–100 (AKTGSGKT) participates in ATP binding. Positions 202-205 (DEAD) match the DEAD box motif. One can recognise a Helicase C-terminal domain in the interval 280–439 (KLNTLFGFIR…DIKNQLQNMC (160 aa)). Disordered regions lie at residues 491 to 535 (IKFQ…KYDR), 555 to 620 (DDTP…GISK), and 654 to 795 (EEGN…EPET). Positions 519–535 (TEKKPKKKDEVRTKYDR) are enriched in basic and acidic residues. Composition is skewed to acidic residues over residues 564–573 (GTADADEDND) and 584–605 (DNDD…DDDV). Residues 670-705 (FRAKGTAEEQRAKFLEEEAERVREADLLDKQTAKDK) show a composition bias toward basic and acidic residues. Acidic residues predominate over residues 720-739 (LDDDDEEALELVDAGDDEDP). Over residues 767 to 778 (KWFEDDSDDERK) the composition is skewed to basic and acidic residues.

The protein belongs to the DEAD box helicase family. DDX10/DBP4 subfamily. Interacts with the U3 and U14 snoRNAs. Associates with pre-ribosomal complexes.

It localises to the nucleus. It is found in the nucleolus. The enzyme catalyses ATP + H2O = ADP + phosphate + H(+). Its function is as follows. ATP-dependent RNA helicase required for ribosome biogenesis. Involved in the release of U14 snoRNA in pre-ribosomal complexes. Required for pre-rRNA cleavage at site A2. The polypeptide is ATP-dependent RNA helicase dbp4 (dbp4) (Sclerotinia sclerotiorum (strain ATCC 18683 / 1980 / Ss-1) (White mold)).